The primary structure comprises 70 residues: Turripeptide OL179 (70 aa).

Residues 1–21 form the signal peptide; the sequence is MMAKQVVVLLALLLLLPIVTA. Positions 22 to 32 are excised as a propeptide; the sequence is SMGDASGRTGR.

Expressed by the venom duct.

Its subcellular location is the secreted. In terms of biological role, acts as a neurotoxin by inhibiting an ion channel. The polypeptide is Turripeptide OL179 (Iotyrris olangoensis (Sea snail)).